Reading from the N-terminus, the 569-residue chain is Adenine deaminase (569 aa).

It belongs to the metallo-dependent hydrolases superfamily. Adenine deaminase family. Mn(2+) serves as cofactor.

The enzyme catalyses adenine + H2O + H(+) = hypoxanthine + NH4(+). The sequence is that of Adenine deaminase from Desulfitobacterium hafniense (strain Y51).